We begin with the raw amino-acid sequence, 451 residues long: Signal transduction histidine-protein kinase ArlS (451 aa).

The next 2 membrane-spanning stretches (helical) occupy residues 11-31 (IIVT…IIIF) and 156-176 (IIAL…SYVF). Residues 178–231 (TQITKPLVSLSNKMIEIRRDGFQNKLQLNTNYEEIDNLANTFNEMMSQIEESFN) form the HAMP domain. Residues 239-451 (DASHELRTPL…NKGTTFKIIF (213 aa)) enclose the Histidine kinase domain. Phosphohistidine; by autocatalysis is present on His-242.

Post-translationally, autophosphorylated.

It is found in the cell membrane. The catalysed reaction is ATP + protein L-histidine = ADP + protein N-phospho-L-histidine.. Its function is as follows. Member of the two-component regulatory system ArlS/ArlR involved in the regulation of adhesion, autolysis, multidrug resistance and virulence. ArlS probably functions as a sensor protein kinase which is autophosphorylated at a histidine residue and transfers its phosphate group to ArlR. The sequence is that of Signal transduction histidine-protein kinase ArlS (arlS) from Staphylococcus aureus (strain bovine RF122 / ET3-1).